The following is a 141-amino-acid chain: Large ribosomal subunit protein uL11 (141 aa).

It belongs to the universal ribosomal protein uL11 family. Part of the ribosomal stalk of the 50S ribosomal subunit. Interacts with L10 and the large rRNA to form the base of the stalk. L10 forms an elongated spine to which L12 dimers bind in a sequential fashion forming a multimeric L10(L12)X complex. In terms of processing, one or more lysine residues are methylated.

Functionally, forms part of the ribosomal stalk which helps the ribosome interact with GTP-bound translation factors. This chain is Large ribosomal subunit protein uL11, found in Clostridium novyi (strain NT).